We begin with the raw amino-acid sequence, 1001 residues long: Serine/threonine-protein kinase TAO1 (1001 aa).

Ser9 is modified (phosphoserine). The 254-residue stretch at 28–281 folds into the Protein kinase domain; sequence FTDLREIGHG…SEELLKHMFV (254 aa). ATP-binding positions include 34–42 and Lys57; that span reads IGHGSFGAV. The Proton acceptor role is filled by Asp151. Disordered stretches follow at residues 324 to 380 and 404 to 431; these read PAVE…DKSE and ENYQ…HKSH. Low complexity predominate over residues 350–370; the sequence is SNQSIPSMSISASSQSSSVNS. Phosphoserine is present on residues Ser421 and Ser445. Positions 458–651 form a coiled coil; that stretch reads SELREQMSGY…QTQKDLEHAM (194 aa). Positions 567 to 587 are disordered; it reads KEELNENQSTPKKEKQEWLSK. Residues 577–587 show a composition bias toward basic and acidic residues; the sequence is PKKEKQEWLSK. Thr669 carries the post-translational modification Phosphothreonine. The stretch at 754 to 877 forms a coiled coil; that stretch reads KAVLKRLKEE…LERQAREIEA (124 aa). The disordered stretch occupies residues 905-1001; it reads PGASSWSHNP…ISNGSHMSYT (97 aa). Over residues 906-915 the composition is skewed to polar residues; sequence GASSWSHNPT. Ser965 is subject to Phosphoserine. Residues 975–1001 show a composition bias toward polar residues; the sequence is GGRTEQGMSRSTSVTSQISNGSHMSYT.

It belongs to the protein kinase superfamily. STE Ser/Thr protein kinase family. STE20 subfamily. In terms of assembly, self-associates. Interacts with MAP2K3. Interacts with SPRED1. Interacts with TESK1; the interaction inhibits TAOK1 kinase activity. Interacts with MAP3K7. In terms of processing, proteolytically processed by caspase-3 (CASP3). Post-translationally, autophosphorylated. Phosphorylated by ATM in response to DNA damage. Phosphorylated by LRRK2.

It is found in the cytoplasm. The enzyme catalyses L-seryl-[protein] + ATP = O-phospho-L-seryl-[protein] + ADP + H(+). It catalyses the reaction L-threonyl-[protein] + ATP = O-phospho-L-threonyl-[protein] + ADP + H(+). With respect to regulation, serine/threonine-protein kinase activity is inhibited by SPRED1. Its function is as follows. Serine/threonine-protein kinase involved in various processes such as p38/MAPK14 stress-activated MAPK cascade, DNA damage response and regulation of cytoskeleton stability. Phosphorylates MAP2K3, MAP2K6 and MARK2. Acts as an activator of the p38/MAPK14 stress-activated MAPK cascade by mediating phosphorylation and subsequent activation of the upstream MAP2K3 and MAP2K6 kinases. Involved in G-protein coupled receptor signaling to p38/MAPK14. In response to DNA damage, involved in the G2/M transition DNA damage checkpoint by activating the p38/MAPK14 stress-activated MAPK cascade, probably by mediating phosphorylation of MAP2K3 and MAP2K6. Acts as a regulator of cytoskeleton stability by phosphorylating 'Thr-208' of MARK2, leading to activate MARK2 kinase activity and subsequent phosphorylation and detachment of MAPT/TAU from microtubules. Also acts as a regulator of apoptosis: regulates apoptotic morphological changes, including cell contraction, membrane blebbing and apoptotic bodies formation via activation of the MAPK8/JNK cascade. During fetal development, it plays an essential role in the regulation of neuronal differentiation and migration to the cortical plate. This is Serine/threonine-protein kinase TAO1 (Taok1) from Rattus norvegicus (Rat).